Reading from the N-terminus, the 30-residue chain is Putative alpha-amylase inhibitor (30 aa).

The protein belongs to the leguminous lectin family.

Lectin and alpha-amylase inhibitor. Acts as a defensive protein against insects. The chain is Putative alpha-amylase inhibitor from Phaseolus vulgaris (Kidney bean).